The chain runs to 248 residues: PACRG-like protein (248 aa).

Met-1 carries the post-translational modification N-acetylmethionine. The segment covering 1–29 has biased composition (polar residues); the sequence is MQKSEGSGGTQLKNRATGNYDQRTSSSTQ. Residues 1-71 form a disordered region; that stretch reads MQKSEGSGGT…LNPKTINPFG (71 aa). The span at 39-49 shows a compositional bias: low complexity; the sequence is SKSSLSTSSPE. Phosphoserine is present on Ser-47.

The sequence is that of PACRG-like protein (PACRGL) from Homo sapiens (Human).